The sequence spans 217 residues: Eukaryotic translation initiation factor 4E (217 aa).

The segment covering 1–11 (MATVEPETTPT) has biased composition (low complexity). The interval 1-27 (MATVEPETTPTTNPPPAEEEKTESNQE) is disordered. Ala-2 carries the N-acetylalanine modification. Thr-22 is modified (phosphothreonine). Positions 37 to 40 (HPLQ) are EIF4EBP1/2/3 binding. 56-57 (WQ) is a binding site for mRNA. The segment at 73–77 (WALYN) is EIF4EBP1/2/3 binding. MRNA is bound at residue 102-103 (WE). The EIF4EBP1/2/3 binding stretch occupies residues 132 to 139 (ETLLCLIG). MRNA-binding positions include 157–162 (RAKGDK) and 205–207 (TKS). Ser-209 is subject to Phosphoserine; by PKC and MKNK2.

It belongs to the eukaryotic initiation factor 4E family. As to quaternary structure, eIF4F is a multi-subunit complex, the composition of which varies with external and internal environmental conditions. It is composed of at least EIF4A, EIF4E and EIF4G1/EIF4G3. EIF4E is also known to interact with other partners. Interacts with EIF4ENIF1/4E-T; promotes recruitment to P-bodies and import into the nucleus. Hypophosphorylated EIF4EBP1, EIF4EBP2 and EIF4EBP3 compete with EIF4G1/EIF4G3 to interact with EIF4E; insulin stimulated MAP-kinase (MAPK1 and MAPK3) phosphorylation of EIF4EBP1 causes dissociation of the complex allowing EIF4G1/EIF4G3 to bind and consequent initiation of translation. Interacts mutually exclusive with EIF4A1 or EIF4A2. Interacts with NGDN and PIWIL2. Component of the CYFIP1-EIF4E-FMR1 complex composed of CYFIP, EIF4E and FMR1. Interacts directly with CYFIP1. Interacts with CLOCK. Binds to MKNK2 in nucleus. Interacts with LIMD1, WTIP and AJUBA. Interacts with APOBEC3G in an RNA-dependent manner. Interacts with LARP1. Interacts with METTL3. Interacts with RBM24; this interaction prevents EIF4E from binding to p53/TP53 mRNA and inhibits the assembly of translation initiation complex. Interacts with DDX3X; interaction is direct and in an RNA-independent manner; this interaction enhances EIF4E cap-binding ability and is required for the repression of cap-dependent translation and the increase of IRES-mediated translation. DDX3X competes with EIF4G1 for interaction with EIF4E. Interacts with EIF4G1; which in a mutual exclusive interaction associates either with EIF1 or with EIF4E on a common binding site. Interacts with BTG4 and CNOT7. Interacts with LRPPRC (via N-terminus); the interaction promotes association of EIF4E with 4ESE-containing mRNAs. Interacts with mRNA cleavage enzyme CPSF3 and its cofactor CPSF1. Interacts (via RING-type zinc finger) with PML; the interaction results in conformational changes of both interacting proteins and reduces EIF4E affinity for the 5' m7G cap of mRNA, thus reducing EIF4E-mediated mRNA nuclear export. Interacts with homeobox protein HHEX/PRH; the interaction inhibits EIF4E-mediated mRNA nuclear export. Interacts with homeobox protein HOXA9; the interaction positively regulates EIF4E-mediated mRNA nuclear export. Interacts with homeobox protein EMX2. In terms of assembly, (Microbial infection) Interacts with murine norovirus viral genome-linked protein; this interaction plays a role in translation of viral proteins. Phosphorylation increases the ability of the protein to bind to mRNA caps and to form the eIF4F complex. Phosphorylation also enhances its mRNA transport function. Phosphorylation at Ser-209 is not essential for protein synthesis.

It localises to the cytoplasm. The protein localises to the P-body. It is found in the stress granule. Its subcellular location is the nucleus. The protein resides in the nucleus speckle. It localises to the nuclear body. Functionally, acts in the cytoplasm to initiate and regulate protein synthesis and is required in the nucleus for export of a subset of mRNAs from the nucleus to the cytoplasm which promotes processes such as RNA capping, processing and splicing. Component of the protein complex eIF4F, which is involved in the recognition of the mRNA cap, ATP-dependent unwinding of 5'-terminal secondary structure and recruitment of mRNA to the ribosome. This protein recognizes and binds the 7-methylguanosine (m7G)-containing mRNA cap during an early step in the initiation of protein synthesis and facilitates ribosome binding by inducing the unwinding of the mRNAs secondary structures. Together with EIF4G1, antagonizes the scanning promoted by EIF1-EIF4G1 and is required for TISU translation, a process where the TISU element recognition makes scanning unnecessary. In addition to its role in translation initiation, also acts as a regulator of translation and stability in the cytoplasm. Component of the CYFIP1-EIF4E-FMR1 complex which binds to the mRNA cap and mediates translational repression: in the complex, EIF4E mediates the binding to the mRNA cap. Component of a multiprotein complex that sequesters and represses translation of proneurogenic factors during neurogenesis. In P-bodies, component of a complex that mediates the storage of translationally inactive mRNAs in the cytoplasm and prevents their degradation. May play an important role in spermatogenesis through translational regulation of stage-specific mRNAs during germ cell development. As well as its roles in translation, also involved in mRNA nucleocytoplasmic transport. Its role in mRNA export from the nucleus to the cytoplasm relies on its ability to bind the m7G cap of RNAs and on the presence of the 50-nucleotide EIF4E sensitivity element (4ESE) in the 3'UTR of sensitive transcripts. Interaction with the 4ESE is mediated by LRPPRC which binds simultaneously to both EIF4E and the 4ESE, thereby acting as a platform for assembly for the RNA export complex. EIF4E-dependent mRNA export is independent of ongoing protein or RNA synthesis and is also NFX1-independent but is XPO1-dependent with LRPPRC interacting with XPO1 to form an EIF4E-dependent mRNA export complex. Alters the composition of the cytoplasmic face of the nuclear pore to promote RNA export by reducing RANBP2 expression, relocalizing nucleoporin NUP214 and increasing expression of RANBP1 and RNA export factors DDX19 and GLE1. Promotes the nuclear export of cyclin CCND1 mRNA. Promotes the nuclear export of NOS2/iNOS mRNA. Promotes the nuclear export of MDM2 mRNA. Also promotes the export of additional mRNAs, including others involved in the cell cycle. In the nucleus, binds to capped splice factor-encoding mRNAs and stimulates their nuclear export to enhance splice factor production by increasing their cytoplasmic availability to the translation machinery. May also regulate splicing through interaction with the spliceosome in an RNA and m7G cap-dependent manner. Also binds to some pre-mRNAs and may play a role in their recruitment to the spliceosome. Promotes steady-state capping of a subset of coding and non-coding RNAs by mediating nuclear export of capping machinery mRNAs including RNMT, RNGTT and RAMAC to enhance their translation. Stimulates mRNA 3'-end processing by promoting the expression of several core cleavage complex factors required for mRNA cleavage and polyadenylation, and may also have a direct effect through its interaction with the CPSF3 cleavage enzyme. Rescues cells from apoptosis by promoting activation of serine/threonine-protein kinase AKT1 through mRNA export of NBS1 which potentiates AKT1 phosphorylation and also through mRNA export of AKT1 effectors, allowing for increased production of these proteins. The protein is Eukaryotic translation initiation factor 4E of Mus musculus (Mouse).